The chain runs to 158 residues: Transcriptional repressor NrdR (158 aa).

Residues 3–34 (CPSCQNTDSRVLESRAAEGGRSVRRRRECLNC) fold into a zinc finger. An ATP-cone domain is found at 49 to 139 (ITVIKRNGHR…VYRHFRSVSD (91 aa)).

The protein belongs to the NrdR family. Requires Zn(2+) as cofactor.

Functionally, negatively regulates transcription of bacterial ribonucleotide reductase nrd genes and operons by binding to NrdR-boxes. This is Transcriptional repressor NrdR from Synechococcus sp. (strain CC9311).